The sequence spans 80 residues: Cell division protein ZapB (80 aa).

The stretch at 3–80 (FEVLEQLEAK…NLLGKMDDVE (78 aa)) forms a coiled coil.

Belongs to the ZapB family. As to quaternary structure, homodimer. The ends of the coiled-coil dimer bind to each other, forming polymers. Interacts with FtsZ.

The protein localises to the cytoplasm. In terms of biological role, non-essential, abundant cell division factor that is required for proper Z-ring formation. It is recruited early to the divisome by direct interaction with FtsZ, stimulating Z-ring assembly and thereby promoting cell division earlier in the cell cycle. Its recruitment to the Z-ring requires functional FtsA or ZipA. This chain is Cell division protein ZapB, found in Vibrio atlanticus (strain LGP32) (Vibrio splendidus (strain Mel32)).